The primary structure comprises 423 residues: Glucose-1-phosphate adenylyltransferase (423 aa).

Alpha-D-glucose 1-phosphate contacts are provided by residues Tyr108, Gly173, Glu188–Lys189, and Ser207.

This sequence belongs to the bacterial/plant glucose-1-phosphate adenylyltransferase family. As to quaternary structure, homotetramer.

The catalysed reaction is alpha-D-glucose 1-phosphate + ATP + H(+) = ADP-alpha-D-glucose + diphosphate. The protein operates within glycan biosynthesis; glycogen biosynthesis. Its function is as follows. Involved in the biosynthesis of ADP-glucose, a building block required for the elongation reactions to produce glycogen. Catalyzes the reaction between ATP and alpha-D-glucose 1-phosphate (G1P) to produce pyrophosphate and ADP-Glc. This chain is Glucose-1-phosphate adenylyltransferase, found in Francisella tularensis subsp. tularensis (strain WY96-3418).